Here is a 507-residue protein sequence, read N- to C-terminus: Maturase K (507 aa).

This sequence belongs to the intron maturase 2 family. MatK subfamily.

It is found in the plastid. It localises to the chloroplast. In terms of biological role, usually encoded in the trnK tRNA gene intron. Probably assists in splicing its own and other chloroplast group II introns. In Lyonia lucida (Fetterbush), this protein is Maturase K.